Reading from the N-terminus, the 239-residue chain is Mediator of RNA polymerase II transcription subunit 7 (239 aa).

Disordered regions lie at residues 1–21 and 43–66; these read MSSL…PPPP and LFVN…DMSV. A compositionally biased stretch (basic and acidic residues) spans 46–66; the sequence is NDEKGKTKGKEKKSDDRDMSV.

Belongs to the Mediator complex subunit 7 family. Component of the Mediator complex.

The protein resides in the nucleus. In terms of biological role, component of the Mediator complex, a coactivator involved in the regulated transcription of nearly all RNA polymerase II-dependent genes. Mediator functions as a bridge to convey information from gene-specific regulatory proteins to the basal RNA polymerase II transcription machinery. Mediator is recruited to promoters by direct interactions with regulatory proteins and serves as a scaffold for the assembly of a functional preinitiation complex with RNA polymerase II and the general transcription factors. This chain is Mediator of RNA polymerase II transcription subunit 7 (MED7), found in Cryptococcus neoformans var. neoformans serotype D (strain B-3501A) (Filobasidiella neoformans).